Consider the following 444-residue polypeptide: Phosphoglucosamine mutase (444 aa).

Ser-102 acts as the Phosphoserine intermediate in catalysis. Mg(2+) is bound by residues Ser-102, Asp-241, Asp-243, and Asp-245. Ser-102 is modified (phosphoserine).

It belongs to the phosphohexose mutase family. Mg(2+) serves as cofactor. Activated by phosphorylation.

The enzyme catalyses alpha-D-glucosamine 1-phosphate = D-glucosamine 6-phosphate. Functionally, catalyzes the conversion of glucosamine-6-phosphate to glucosamine-1-phosphate. The protein is Phosphoglucosamine mutase of Leptothrix cholodnii (strain ATCC 51168 / LMG 8142 / SP-6) (Leptothrix discophora (strain SP-6)).